We begin with the raw amino-acid sequence, 802 residues long: Fibroblast growth factor receptor 3 (802 aa).

An Ig-like C2-type 1 domain is found at 27–115 (PDYLMVEQPP…ILRNFTIRVT (89 aa)). Cys-52 and Cys-98 are oxidised to a cystine. 3 N-linked (GlcNAc...) asparagine glycosylation sites follow: Asn-74, Asn-87, and Asn-109. The interval 116–148 (DLPSSGDDEDDDDDDDDETEDREPPRWTQPERM) is disordered. Residues 121–136 (GDDEDDDDDDDDETED) are compositionally biased toward acidic residues. The span at 137-148 (REPPRWTQPERM) shows a compositional bias: basic and acidic residues. Ig-like C2-type domains are found at residues 140-233 (PRWT…YQLD) and 242-342 (PILQ…FWLH). The cysteines at positions 165 and 217 are disulfide-linked. 5 N-linked (GlcNAc...) asparagine glycosylation sites follow: Asn-214, Asn-251, Asn-283, Asn-303, and Asn-315. Cys-264 and Cys-326 are joined by a disulfide. Residues 363-383 (ITVLIVVTSTIVFILLVIIVI) form a helical membrane-spanning segment. Topologically, residues 384-802 (THLMKVPSKK…HQQHNGAIPT (419 aa)) are cytoplasmic. In terms of domain architecture, Protein kinase spans 462–751 (LTLGKPLGEG…LTVTSTNEYL (290 aa)). ATP-binding positions include 468-476 (LGEGCFGQV) and Lys-498. The active-site Proton acceptor is Asp-607. A phosphotyrosine; by autocatalysis mark is found at Tyr-637, Tyr-638, Tyr-714, and Tyr-750.

This sequence belongs to the protein kinase superfamily. Tyr protein kinase family. Fibroblast growth factor receptor subfamily. In terms of assembly, monomer. Homodimer after ligand binding. Post-translationally, autophosphorylated. Binding of FGF family members together with heparan sulfate proteoglycan or heparin promotes receptor dimerization and autophosphorylation on tyrosine residues. Autophosphorylation occurs in trans between the two FGFR molecules present in the dimer.

It is found in the cell membrane. The enzyme catalyses L-tyrosyl-[protein] + ATP = O-phospho-L-tyrosyl-[protein] + ADP + H(+). Its activity is regulated as follows. Present in an inactive conformation in the absence of bound ligand. Ligand binding leads to dimerization and activation by autophosphorylation on tyrosine residues. Functionally, tyrosine-protein kinase that acts as a cell-surface receptor for fibroblast growth factors and plays an essential role in the regulation of cell proliferation, differentiation and apoptosis. Plays an essential role in the regulation of chondrocyte differentiation, proliferation and apoptosis, and is required for normal skeleton development. Regulates both osteogenesis and postnatal bone mineralization by osteoblasts. Promotes apoptosis in chondrocytes, but can also promote cancer cell proliferation. Phosphorylates PLCG1, CBL and FRS2. Ligand binding leads to the activation of several signaling cascades. Activation of PLCG1 leads to the production of the cellular signaling molecules diacylglycerol and inositol 1,4,5-trisphosphate. Phosphorylation of FRS2 triggers recruitment of GRB2, GAB1, PIK3R1 and SOS1, and mediates activation of RAS, MAPK1/ERK2, MAPK3/ERK1 and the MAP kinase signaling pathway, as well as of the AKT1 signaling pathway. The sequence is that of Fibroblast growth factor receptor 3 (fgfr3) from Xenopus laevis (African clawed frog).